The following is a 490-amino-acid chain: Probable cytosol aminopeptidase (490 aa).

Residues K262 and D267 each coordinate Mn(2+). K274 is an active-site residue. Residues D285, D344, and E346 each coordinate Mn(2+). R348 is an active-site residue.

It belongs to the peptidase M17 family. Mn(2+) serves as cofactor.

It is found in the cytoplasm. The enzyme catalyses Release of an N-terminal amino acid, Xaa-|-Yaa-, in which Xaa is preferably Leu, but may be other amino acids including Pro although not Arg or Lys, and Yaa may be Pro. Amino acid amides and methyl esters are also readily hydrolyzed, but rates on arylamides are exceedingly low.. It carries out the reaction Release of an N-terminal amino acid, preferentially leucine, but not glutamic or aspartic acids.. Presumably involved in the processing and regular turnover of intracellular proteins. Catalyzes the removal of unsubstituted N-terminal amino acids from various peptides. The sequence is that of Probable cytosol aminopeptidase from Xanthomonas oryzae pv. oryzae (strain MAFF 311018).